We begin with the raw amino-acid sequence, 153 residues long: Transcriptional repressor NrdR (153 aa).

A zinc finger lies at 3–34 (CPFCNSTDTQVKDSRSIENDMLIRRRRVCLVC). The ATP-cone domain occupies 49–139 (FMVVKKNGET…VYMNFRNIND (91 aa)).

Belongs to the NrdR family. Zn(2+) is required as a cofactor.

In terms of biological role, negatively regulates transcription of bacterial ribonucleotide reductase nrd genes and operons by binding to NrdR-boxes. This Ehrlichia chaffeensis (strain ATCC CRL-10679 / Arkansas) protein is Transcriptional repressor NrdR.